A 953-amino-acid polypeptide reads, in one-letter code: Isoleucine--tRNA ligase (953 aa).

The 'HIGH' region signature appears at 58-68 (PYANGNIHLGH). Glutamate 565 serves as a coordination point for L-isoleucyl-5'-AMP. Residues 606-610 (KMSKS) carry the 'KMSKS' region motif. ATP is bound at residue lysine 609. Zn(2+)-binding residues include cysteine 916, cysteine 919, cysteine 936, and cysteine 939.

Belongs to the class-I aminoacyl-tRNA synthetase family. IleS type 1 subfamily. In terms of assembly, monomer. Zn(2+) is required as a cofactor.

The protein resides in the cytoplasm. It carries out the reaction tRNA(Ile) + L-isoleucine + ATP = L-isoleucyl-tRNA(Ile) + AMP + diphosphate. Catalyzes the attachment of isoleucine to tRNA(Ile). As IleRS can inadvertently accommodate and process structurally similar amino acids such as valine, to avoid such errors it has two additional distinct tRNA(Ile)-dependent editing activities. One activity is designated as 'pretransfer' editing and involves the hydrolysis of activated Val-AMP. The other activity is designated 'posttransfer' editing and involves deacylation of mischarged Val-tRNA(Ile). The protein is Isoleucine--tRNA ligase of Colwellia psychrerythraea (strain 34H / ATCC BAA-681) (Vibrio psychroerythus).